Here is a 294-residue protein sequence, read N- to C-terminus: tRNA dimethylallyltransferase (294 aa).

An ATP-binding site is contributed by 9-16; the sequence is GATATGKS. Residue 11–16 participates in substrate binding; the sequence is TATGKS. Residues 34 to 37 are interaction with substrate tRNA; it reads DSRQ.

The protein belongs to the IPP transferase family. Monomer. Mg(2+) serves as cofactor.

It catalyses the reaction adenosine(37) in tRNA + dimethylallyl diphosphate = N(6)-dimethylallyladenosine(37) in tRNA + diphosphate. Its function is as follows. Catalyzes the transfer of a dimethylallyl group onto the adenine at position 37 in tRNAs that read codons beginning with uridine, leading to the formation of N6-(dimethylallyl)adenosine (i(6)A). The sequence is that of tRNA dimethylallyltransferase from Trichormus variabilis (strain ATCC 29413 / PCC 7937) (Anabaena variabilis).